A 3432-amino-acid chain; its full sequence is Genome polyprotein (3432 aa).

Positions 2–15 are interaction with host EXOC1; that stretch reads TKKPGGPGKNRAIN. Topologically, residues 2-109 are cytoplasmic; the sequence is TKKPGGPGKN…RKQNKRGGNE (108 aa). Positions 37 to 72 are hydrophobic; homodimerization of capsid protein C; that stretch reads LLDGRGPVRFVLALITFFKFTALAPTKALLGRWKAV. Residues 106-127 constitute a propeptide, ER anchor for the capsid protein C, removed in mature form by serine protease NS3; sequence GGNEGSIMWLASLAVVIAYAGA. A helical transmembrane segment spans residues 110 to 130; it reads GSIMWLASLAVVIAYAGAMKL. At 131–253 the chain is on the extracellular side; sequence SNFQGKLLMT…ATRYLMKTEN (123 aa). Asparagine 142 carries an N-linked (GlcNAc...) asparagine; by host glycan. Residues 254 to 274 traverse the membrane as a helical segment; it reads WIIRNPGYAFLAATLGWMLGS. The Cytoplasmic segment spans residues 275-279; it reads NNGQR. The helical transmembrane segment at 280–294 threads the bilayer; sequence VVFTILLLLVAPAYS. The Extracellular segment spans residues 295 to 746; it reads FNCLGMGNRD…QVFGGAFRTL (452 aa). 6 cysteine pairs are disulfide-bonded: cysteine 297–cysteine 324, cysteine 354–cysteine 410, cysteine 354–cysteine 415, cysteine 368–cysteine 399, cysteine 386–cysteine 410, and cysteine 386–cysteine 415. A fusion peptide region spans residues 392 to 405; that stretch reads DRGWGNGCGLFGKG. N-linked (GlcNAc...) asparagine; by host glycosylation is present at asparagine 448. 2 disulfides stabilise this stretch: cysteine 484–cysteine 581 and cysteine 598–cysteine 629. The helical transmembrane segment at 747 to 767 threads the bilayer; sequence FGGMSWITQGLMGALLLWMGV. Topologically, residues 768–773 are cytoplasmic; that stretch reads NARDRS. A helical membrane pass occupies residues 774–794; that stretch reads IALAFLATGGVLVFLATNVHA. Topologically, residues 795-1219 are extracellular; that stretch reads DTGCAIDITR…AFAEANSGGD (425 aa). Intrachain disulfides connect cysteine 798-cysteine 809, cysteine 849-cysteine 937, cysteine 973-cysteine 1017, cysteine 1074-cysteine 1123, cysteine 1085-cysteine 1106, and cysteine 1107-cysteine 1110. N-linked (GlcNAc...) asparagine; by host glycosylation is found at asparagine 924 and asparagine 1001. Residues 1220–1240 traverse the membrane as a helical segment; sequence VLHLALIAVFKIQPAFLVMNM. The Cytoplasmic portion of the chain corresponds to 1241-1250; that stretch reads LSTRWTNQEN. A helical membrane pass occupies residues 1251–1271; it reads VVLVLGAALFQLASVDLQIGV. Histidine 1272 is a topological domain (lumenal). Residues 1273–1293 form a helical membrane-spanning segment; the sequence is GILNAAAIAWMIVRAITFPTT. Over 1294–1309 the chain is Cytoplasmic; sequence SSVTMPVLALLTPGMR. Residues 1310–1330 traverse the membrane as a helical segment; sequence ALYLDTYRIILLVIGICSLLQ. Topologically, residues 1331–1341 are lumenal; sequence ERKKTMAKKKG. A helical membrane pass occupies residues 1342 to 1362; the sequence is AVLLGLALTSTGWFSPTTIAA. The Cytoplasmic segment spans residues 1363-1374; that stretch reads GLMVCNPNKKRG. A helical transmembrane segment spans residues 1375–1395; that stretch reads WPATEFLSAVGLMFAIVGGLA. The Lumenal portion of the chain corresponds to 1396–1398; that stretch reads ELD. Residues 1399-1419 form a helical membrane-spanning segment; the sequence is IESMSIPFMLAGLMAVSYVVS. The Cytoplasmic segment spans residues 1420–1476; the sequence is GKATDMWLERAADISWEMDAAITGSSRRLDVKLDDDGDFHLIDDPGVPWKVWVLRMS. The tract at residues 1427–1466 is interacts with and activates NS3 protease; that stretch reads LERAADISWEMDAAITGSSRRLDVKLDDDGDFHLIDDPGV. An intramembrane region (helical) is located at residues 1477 to 1497; it reads CIGLAALTPWAIVPAAFGYWL. Residues 1498-2173 lie on the Cytoplasmic side of the membrane; it reads TLKTTKRGGV…RMALEELPDA (676 aa). The Peptidase S7 domain occupies 1505 to 1682; sequence GGVFWDTPSP…DRQEEPVPEA (178 aa). Catalysis depends on charge relay system; for serine protease NS3 activity residues histidine 1555, aspartate 1579, and serine 1639. The Helicase ATP-binding domain maps to 1685–1841; sequence PNMLRKRQMT…DSNAPIHDLQ (157 aa). Positions 1689-1692 are important for RNA-binding; sequence RKRQ. Position 1698 to 1705 (1698 to 1705) interacts with ATP; the sequence is LHPGSGKT. The DEAH box signature appears at 1789–1792; it reads DEAH. A Helicase C-terminal domain is found at 1852-2017; that stretch reads GYEWITEYAG…GLVAQLYGPE (166 aa). Lysine 1893 carries the post-translational modification N6-acetyllysine; by host. Residues 1950 to 1971 are disordered; it reads NPSPITSASAAQRRGRVGRNPN. A regulates the ATPase activity of NS3 helicase region spans residues 2168-2172; the sequence is EELPD. A helical membrane pass occupies residues 2174–2194; that stretch reads LETITLIVAITVMTGGFFLLM. Topologically, residues 2195–2199 are lumenal; the sequence is MQRKG. Positions 2200–2220 form an intramembrane region, helical; the sequence is IGKMGLGALVLTLATFFLWAA. A topological domain (lumenal) is located at residue glutamate 2221. The chain crosses the membrane as a helical span at residues 2222 to 2242; it reads VPGTKIAGTLLIALLLMVVLI. Over 2243–2257 the chain is Cytoplasmic; sequence PEPEKQRSQTDNQLA. A helical membrane pass occupies residues 2258–2278; the sequence is VFLICVLTVVGVVAANEYGML. Topologically, residues 2279-2311 are lumenal; sequence EKTKADLKSMFVGKTQASGLTGLPSMALDLRPA. The segment at residues 2312–2332 is an intramembrane region (helical); that stretch reads TAWALYGGSTVVLTPLLKHLI. Residues 2333-2368 are Lumenal-facing; it reads TSEYVTTSLASINSQAGSLFVLPRGVPFTDLDLTVG. A helical membrane pass occupies residues 2369 to 2389; the sequence is LVFLGCWGQITLTTFLTAMVL. Residues 2390–2444 lie on the Cytoplasmic side of the membrane; sequence ATLHYGYMLPGWQAEALRAAQRRTAAGIMKNAVVDGMVATDVPELERTTPLMQKK. The helical transmembrane segment at 2445–2465 threads the bilayer; it reads VGQVLLIGVSVAAFLVNPNVT. Over 2466–2469 the chain is Lumenal; the sequence is TVRE. The helical transmembrane segment at 2470–2490 threads the bilayer; the sequence is AGVLVTAATLTLWDNGASAVW. The Cytoplasmic portion of the chain corresponds to 2491-3432; that stretch reads NSTTATGLCH…DVLIQEDRVI (942 aa). Positions 2528–2793 constitute an mRNA cap 0-1 NS5-type MT domain; that stretch reads GRPGGRTLGE…DVNLGSGTRA (266 aa). Serine 2583 is an S-adenosyl-L-methionine binding site. At serine 2583 the chain carries Phosphoserine. The active-site For 2'-O-MTase activity is lysine 2588. 6 residues coordinate S-adenosyl-L-methionine: glycine 2613, tryptophan 2614, threonine 2631, lysine 2632, aspartate 2658, and valine 2659. Aspartate 2673 functions as the For 2'-O-MTase activity in the catalytic mechanism. Position 2674 (isoleucine 2674) interacts with S-adenosyl-L-methionine. Catalysis depends on for 2'-O-MTase activity residues lysine 2709 and glutamate 2745. An S-adenosyl-L-methionine-binding site is contributed by tyrosine 2747. Residues glutamate 2967, histidine 2971, cysteine 2976, and cysteine 2979 each contribute to the Zn(2+) site. In terms of domain architecture, RdRp catalytic spans 3057-3209; that stretch reads GKMYADDTAG…KPLDDRFATA (153 aa). Zn(2+) contacts are provided by histidine 3244, cysteine 3260, and cysteine 3379.

This sequence in the N-terminal section; belongs to the class I-like SAM-binding methyltransferase superfamily. mRNA cap 0-1 NS5-type methyltransferase family. In terms of assembly, homodimer. Interacts (via N-terminus) with host EXOC1 (via C-terminus); this interaction results in EXOC1 degradation through the proteasome degradation pathway. Forms heterodimers with envelope protein E in the endoplasmic reticulum and Golgi. As to quaternary structure, homodimer; in the endoplasmic reticulum and Golgi. Interacts with protein prM. Interacts with non-structural protein 1. Interacts with host HSPA5. In terms of assembly, homodimer; Homohexamer when secreted. Interacts with envelope protein E. NS1 interacts with NS4B. Interacts with host complement protein CFH; this interaction leads to the degradation of C3. Interacts (via N-terminus) with serine protease NS3. As to quaternary structure, forms a heterodimer with serine protease NS3. May form homooligomers. In terms of assembly, forms a heterodimer with NS2B. Interacts with non-structural protein 2A (via N-terminus). Interacts with NS4B. Interacts with unphosphorylated RNA-directed RNA polymerase NS5; this interaction stimulates RNA-directed RNA polymerase NS5 guanylyltransferase activity. Interacts with host ILF2. Interacts with serine protease NS3. As to quaternary structure, homodimer. Interacts with host STAT2; this interaction inhibits the phosphorylation of the latter, and, when all viral proteins are present (polyprotein), targets STAT2 for degradation. Interacts with serine protease NS3. Mn(2+) is required as a cofactor. Mg(2+) serves as cofactor. Post-translationally, specific enzymatic cleavages in vivo yield mature proteins. Cleavages in the lumen of endoplasmic reticulum are performed by host signal peptidase, whereas cleavages in the cytoplasmic side are performed by serine protease NS3. Signal cleavage at the 2K-4B site requires a prior NS3 protease-mediated cleavage at the 4A-2K site. In terms of processing, cleaved in post-Golgi vesicles by a host furin, releasing the mature small envelope protein M, and peptide pr. This cleavage is incomplete as up to 30% of viral particles still carry uncleaved prM. N-glycosylated. Post-translationally, N-glycosylated. The excreted form is glycosylated and this is required for efficient secretion of the protein from infected cells. In terms of processing, acetylated by host KAT5. Acetylation modulates NS3 RNA-binding and unwinding activities and plays an important positive role for viral replication. Phosphorylated on serines residues. This phosphorylation may trigger NS5 nuclear localization.

It is found in the virion. The protein resides in the host nucleus. The protein localises to the host cytoplasm. It localises to the host perinuclear region. Its subcellular location is the secreted. It is found in the virion membrane. The protein resides in the host endoplasmic reticulum membrane. The protein localises to the host cell surface. The catalysed reaction is Selective hydrolysis of -Xaa-Xaa-|-Yaa- bonds in which each of the Xaa can be either Arg or Lys and Yaa can be either Ser or Ala.. The enzyme catalyses RNA(n) + a ribonucleoside 5'-triphosphate = RNA(n+1) + diphosphate. It catalyses the reaction a ribonucleoside 5'-triphosphate + H2O = a ribonucleoside 5'-diphosphate + phosphate + H(+). It carries out the reaction ATP + H2O = ADP + phosphate + H(+). The catalysed reaction is a 5'-end (5'-triphosphoguanosine)-ribonucleoside in mRNA + S-adenosyl-L-methionine = a 5'-end (N(7)-methyl 5'-triphosphoguanosine)-ribonucleoside in mRNA + S-adenosyl-L-homocysteine. The enzyme catalyses a 5'-end (N(7)-methyl 5'-triphosphoguanosine)-ribonucleoside in mRNA + S-adenosyl-L-methionine = a 5'-end (N(7)-methyl 5'-triphosphoguanosine)-(2'-O-methyl-ribonucleoside) in mRNA + S-adenosyl-L-homocysteine + H(+). In terms of biological role, plays a role in virus budding by binding to the cell membrane and gathering the viral RNA into a nucleocapsid that forms the core of a mature virus particle. During virus entry, may induce genome penetration into the host cytoplasm after hemifusion induced by the surface proteins. Can migrate to the cell nucleus where it modulates host functions. Overcomes the anti-viral effects of host EXOC1 by sequestering and degrading the latter through the proteasome degradation pathway. Inhibits RNA silencing by interfering with host Dicer. Its function is as follows. Prevents premature fusion activity of envelope proteins in trans-Golgi by binding to envelope protein E at pH 6.0. After virion release in extracellular space, gets dissociated from E dimers. Functionally, acts as a chaperone for envelope protein E during intracellular virion assembly by masking and inactivating envelope protein E fusion peptide. prM is the only viral peptide matured by host furin in the trans-Golgi network probably to avoid catastrophic activation of the viral fusion activity in acidic Golgi compartment prior to virion release. prM-E cleavage is inefficient, and many virions are only partially matured. These uncleaved prM would play a role in immune evasion. In terms of biological role, may play a role in virus budding. Exerts cytotoxic effects by activating a mitochondrial apoptotic pathway through M ectodomain. May display a viroporin activity. Binds to host cell surface receptor and mediates fusion between viral and cellular membranes. Efficient virus attachment to cell is, at least in part, mediated by host HSPA5. Envelope protein is synthesized in the endoplasmic reticulum in the form of heterodimer with protein prM. They play a role in virion budding in the ER, and the newly formed immature particle is covered with 60 spikes composed of heterodimer between precursor prM and envelope protein E. The virion is transported to the Golgi apparatus where the low pH causes dissociation of PrM-E heterodimers and formation of E homodimers. prM-E cleavage is inefficient, and many virions are only partially matured. These uncleaved prM would play a role in immune evasion. Its function is as follows. Involved in immune evasion, pathogenesis and viral replication. Once cleaved off the polyprotein, is targeted to three destinations: the viral replication cycle, the plasma membrane and the extracellular compartment. Essential for viral replication. Required for formation of the replication complex and recruitment of other non-structural proteins to the ER-derived membrane structures. Excreted as a hexameric lipoparticle that plays a role against host immune response. Antagonizing the complement function. Binds to the host macrophages and dendritic cells. Inhibits signal transduction originating from Toll-like receptor 3 (TLR3). Functionally, component of the viral RNA replication complex that functions in virion assembly and antagonizes the host alpha/beta interferon antiviral response. In terms of biological role, required cofactor for the serine protease function of NS3. May have membrane-destabilizing activity and form viroporins. Displays three enzymatic activities: serine protease, NTPase and RNA helicase. NS3 serine protease, in association with NS2B, performs its autocleavage and cleaves the polyprotein at dibasic sites in the cytoplasm: C-prM, NS2A-NS2B, NS2B-NS3, NS3-NS4A, NS4A-2K and NS4B-NS5. NS3 RNA helicase binds RNA and unwinds dsRNA in the 3' to 5' direction. Its function is as follows. Regulates the ATPase activity of the NS3 helicase activity. NS4A allows NS3 helicase to conserve energy during unwinding. Functionally, functions as a signal peptide for NS4B and is required for the interferon antagonism activity of the latter. In terms of biological role, induces the formation of ER-derived membrane vesicles where the viral replication takes place. Inhibits interferon (IFN)-induced host STAT1 phosphorylation and nuclear translocation, thereby preventing the establishment of cellular antiviral state by blocking the IFN-alpha/beta pathway. Inhibits STAT2 translocation in the nucleus after IFN-alpha treatment. Replicates the viral (+) and (-) RNA genome, and performs the capping of genomes in the cytoplasm. NS5 methylates viral RNA cap at guanine N-7 and ribose 2'-O positions. Besides its role in RNA genome replication, also prevents the establishment of cellular antiviral state by blocking the interferon-alpha/beta (IFN-alpha/beta) signaling pathway. Inhibits host TYK2 and STAT2 phosphorylation, thereby preventing activation of JAK-STAT signaling pathway. The protein is Genome polyprotein of Ardeidae (herons).